Reading from the N-terminus, the 158-residue chain is 2-C-methyl-D-erythritol 2,4-cyclodiphosphate synthase (158 aa).

Residues D9 and H11 each contribute to the a divalent metal cation site. 4-CDP-2-C-methyl-D-erythritol 2-phosphate contacts are provided by residues D9–H11 and H35–S36. Residue H43 coordinates a divalent metal cation. Residues D57–G59, F62–D66, A101–A107, T133–E136, F140, and R143 each bind 4-CDP-2-C-methyl-D-erythritol 2-phosphate.

It belongs to the IspF family. As to quaternary structure, homotrimer. It depends on a divalent metal cation as a cofactor.

The enzyme catalyses 4-CDP-2-C-methyl-D-erythritol 2-phosphate = 2-C-methyl-D-erythritol 2,4-cyclic diphosphate + CMP. It functions in the pathway isoprenoid biosynthesis; isopentenyl diphosphate biosynthesis via DXP pathway; isopentenyl diphosphate from 1-deoxy-D-xylulose 5-phosphate: step 4/6. Its function is as follows. Involved in the biosynthesis of isopentenyl diphosphate (IPP) and dimethylallyl diphosphate (DMAPP), two major building blocks of isoprenoid compounds. Catalyzes the conversion of 4-diphosphocytidyl-2-C-methyl-D-erythritol 2-phosphate (CDP-ME2P) to 2-C-methyl-D-erythritol 2,4-cyclodiphosphate (ME-CPP) with a corresponding release of cytidine 5-monophosphate (CMP). The sequence is that of 2-C-methyl-D-erythritol 2,4-cyclodiphosphate synthase from Geobacillus sp. (strain WCH70).